A 344-amino-acid chain; its full sequence is Succinylglutamate desuccinylase (344 aa).

H63, E66, and H160 together coordinate Zn(2+). The active site involves E224.

Belongs to the AspA/AstE family. Succinylglutamate desuccinylase subfamily. It depends on Zn(2+) as a cofactor.

It carries out the reaction N-succinyl-L-glutamate + H2O = L-glutamate + succinate. It functions in the pathway amino-acid degradation; L-arginine degradation via AST pathway; L-glutamate and succinate from L-arginine: step 5/5. Functionally, transforms N(2)-succinylglutamate into succinate and glutamate. The chain is Succinylglutamate desuccinylase from Shewanella sp. (strain MR-7).